Here is a 700-residue protein sequence, read N- to C-terminus: Elongation factor G (700 aa).

A tr-type G domain is found at 8-290 (ERYRNIGISA…AVVEFMPSPV (283 aa)). GTP contacts are provided by residues 17–24 (AHIDAGKT), 88–92 (DTPGH), and 142–145 (NKMD).

The protein belongs to the TRAFAC class translation factor GTPase superfamily. Classic translation factor GTPase family. EF-G/EF-2 subfamily.

It is found in the cytoplasm. In terms of biological role, catalyzes the GTP-dependent ribosomal translocation step during translation elongation. During this step, the ribosome changes from the pre-translocational (PRE) to the post-translocational (POST) state as the newly formed A-site-bound peptidyl-tRNA and P-site-bound deacylated tRNA move to the P and E sites, respectively. Catalyzes the coordinated movement of the two tRNA molecules, the mRNA and conformational changes in the ribosome. The sequence is that of Elongation factor G from Albidiferax ferrireducens (strain ATCC BAA-621 / DSM 15236 / T118) (Rhodoferax ferrireducens).